We begin with the raw amino-acid sequence, 835 residues long: Disease resistance protein RPP13 (835 aa).

Residues 25–41 (MAVKEDLEELKTELTCI) are a coiled coil. Residues 144-453 (SSLRVRQLRR…AEGFIQGDEE (310 aa)) form the NB-ARC domain. 192–199 (GMGGLGKT) contributes to the ATP binding site.

This sequence belongs to the disease resistance NB-LRR family. RPP13 subfamily.

Functionally, disease resistance protein. Resistance proteins guard the plant against pathogens that contain an appropriate avirulence protein via an indirect interaction with this avirulence protein. That triggers a defense system including the hypersensitive response, which restricts the pathogen growth. In contrast to other resistance proteins, it works independently of ESD1 and NSD1 proteins and does not require the accumulation of salicylic acid, suggesting the existence of an independent signaling pathway. The specificity to avirulence proteins differs in the different cultivars. The sequence is that of Disease resistance protein RPP13 (RPP13) from Arabidopsis thaliana (Mouse-ear cress).